A 97-amino-acid chain; its full sequence is Ferredoxin-like protein (97 aa).

Residues 56–86 (GQVEVIADGCMECGTCRVLCEESGDIDWSYP) form the 4Fe-4S ferredoxin-type domain.

It to ferredoxins from P.putida and C.tartarivorum, ferredoxin I from A.vinelandii, ferredoxin II from D.desulfuricans.

Its function is as follows. Could be a 3Fe-4S cluster-containing protein. This chain is Ferredoxin-like protein (fixX), found in Sinorhizobium fredii (strain NBRC 101917 / NGR234).